Here is a 202-residue protein sequence, read N- to C-terminus: Holliday junction branch migration complex subunit RuvA (202 aa).

Residues 1–63 are domain I; it reads MIAFLSGRVV…EDSLTLFGFA (63 aa). A domain II region spans residues 64–142; it reads DDDERDTFER…EPGGDTAATP (79 aa). The flexible linker stretch occupies residues 143 to 152; the sequence is EQSAAAAPRN. Residues 152–202 are domain III; that stretch reads NWRAQVVSGLVNLGWSTREAEAAADAVAAEAGEQPDVAALLRSALRRLSRA.

This sequence belongs to the RuvA family. In terms of assembly, homotetramer. Forms an RuvA(8)-RuvB(12)-Holliday junction (HJ) complex. HJ DNA is sandwiched between 2 RuvA tetramers; dsDNA enters through RuvA and exits via RuvB. An RuvB hexamer assembles on each DNA strand where it exits the tetramer. Each RuvB hexamer is contacted by two RuvA subunits (via domain III) on 2 adjacent RuvB subunits; this complex drives branch migration. In the full resolvosome a probable DNA-RuvA(4)-RuvB(12)-RuvC(2) complex forms which resolves the HJ.

The protein resides in the cytoplasm. Its function is as follows. The RuvA-RuvB-RuvC complex processes Holliday junction (HJ) DNA during genetic recombination and DNA repair, while the RuvA-RuvB complex plays an important role in the rescue of blocked DNA replication forks via replication fork reversal (RFR). RuvA specifically binds to HJ cruciform DNA, conferring on it an open structure. The RuvB hexamer acts as an ATP-dependent pump, pulling dsDNA into and through the RuvAB complex. HJ branch migration allows RuvC to scan DNA until it finds its consensus sequence, where it cleaves and resolves the cruciform DNA. This is Holliday junction branch migration complex subunit RuvA from Thermobifida fusca (strain YX).